A 283-amino-acid polypeptide reads, in one-letter code: Pantothenate synthetase (283 aa).

26–33 (MGNLHEGH) lines the ATP pocket. The active-site Proton donor is the His-33. Gln-57 is a binding site for (R)-pantoate. Gln-57 provides a ligand contact to beta-alanine. 148–151 (GKKD) is a binding site for ATP. Gln-154 contributes to the (R)-pantoate binding site. 185-188 (LSSR) is a binding site for ATP.

It belongs to the pantothenate synthetase family. Homodimer.

Its subcellular location is the cytoplasm. It carries out the reaction (R)-pantoate + beta-alanine + ATP = (R)-pantothenate + AMP + diphosphate + H(+). Its pathway is cofactor biosynthesis; (R)-pantothenate biosynthesis; (R)-pantothenate from (R)-pantoate and beta-alanine: step 1/1. Functionally, catalyzes the condensation of pantoate with beta-alanine in an ATP-dependent reaction via a pantoyl-adenylate intermediate. The sequence is that of Pantothenate synthetase from Polaromonas naphthalenivorans (strain CJ2).